We begin with the raw amino-acid sequence, 275 residues long: tRNA pseudouridine synthase A (275 aa).

Asp-62 functions as the Nucleophile in the catalytic mechanism. Tyr-124 contacts substrate.

This sequence belongs to the tRNA pseudouridine synthase TruA family. As to quaternary structure, homodimer.

It catalyses the reaction uridine(38/39/40) in tRNA = pseudouridine(38/39/40) in tRNA. Functionally, formation of pseudouridine at positions 38, 39 and 40 in the anticodon stem and loop of transfer RNAs. This Herminiimonas arsenicoxydans protein is tRNA pseudouridine synthase A.